Consider the following 435-residue polypeptide: Nucleosome assembly protein 1 (435 aa).

The tract at residues 1–51 is disordered; the sequence is MTEQPINTKKKNGDISKAPTPQNTPASVTNSYMRSKPPTVSTIQESNNEDG. S16 bears the Phosphoserine mark. Polar residues predominate over residues 19-50; it reads PTPQNTPASVTNSYMRSKPPTVSTIQESNNED. Phosphothreonine occurs at positions 20 and 24. S27 is modified (phosphoserine). T29 carries the post-translational modification Phosphothreonine. S31 and S35 each carry phosphoserine. The residue at position 42 (T42) is a Phosphothreonine. A Phosphoserine modification is found at S46. Phosphothreonine is present on T52. Composition is skewed to acidic residues over residues 146–185 and 338–355; these read PTVE…EDEQ and EAND…DEEL. Disordered regions lie at residues 146–187 and 308–435; these read PTVE…EQGI and ESFF…CKQQ. The segment covering 356-374 has biased composition (basic and acidic residues); that stretch reads EARLELDYQLGEEIKDRLI. The span at 386-421 shows a compositional bias: acidic residues; the sequence is VDFDYPELEGEGDEDEYSDEDGEGDSDDDDDDDDEA.

Belongs to the nucleosome assembly protein (NAP) family. As to quaternary structure, component of the GIN4 complex which forms a ring at the bud neck. In terms of processing, phosphorylation is cell cycle dependent and is important for its bud neck localization. Phosphorylation is highest in newly collected G1 cells, declines when the cells are traversing through the G1 phase, and reaches the lowest level around the time of bud emergence. Phosphorylation increases and remains high through the rest of the cell cycle until the beginning of the next one, when it decreases again. Phosphorylation involves two septin ring-associated kinases, CLA4 and GIN4, and its dephosphorylation occurs at the septin ring in a manner dependent on the phosphatases PP2A and CDC14.

It localises to the bud neck. Its subcellular location is the bud tip. Its function is as follows. Acidic protein, which assembles histones into an octamer. Involved in the regulation of the localization and the function of the septins during mitosis. The sequence is that of Nucleosome assembly protein 1 (NAP1) from Candida albicans (strain SC5314 / ATCC MYA-2876) (Yeast).